Reading from the N-terminus, the 259-residue chain is 3-oxo-5-alpha-steroid 4-dehydrogenase 1 (259 aa).

The next 5 helical transmembrane spans lie at 10-30 (LCLLDMLVYLEGFMAFVSIVG), 86-106 (VLLAMFLIHYVQRTLVFPVLI), 111-131 (PTLLVTFVLAFLFCTFNGYVQ), 146-166 (VTHPCFLTGFALWLVGMVINI), and 206-226 (WCGFALASWSLQGVVFALFTL).

This sequence belongs to the steroid 5-alpha reductase family. Liver and prostate (at a low level).

It localises to the microsome membrane. The protein resides in the endoplasmic reticulum membrane. It carries out the reaction a 3-oxo-5alpha-steroid + NADP(+) = a 3-oxo-Delta(4)-steroid + NADPH + H(+). The enzyme catalyses 5alpha-pregnane-3,20-dione + NADP(+) = progesterone + NADPH + H(+). It catalyses the reaction 17beta-hydroxy-5alpha-androstan-3-one + NADP(+) = testosterone + NADPH + H(+). The catalysed reaction is androst-4-ene-3,17-dione + NADPH + H(+) = 5alpha-androstan-3,17-dione + NADP(+). Functionally, converts testosterone into 5-alpha-dihydrotestosterone and progesterone or corticosterone into their corresponding 5-alpha-3-oxosteroids. It plays a central role in sexual differentiation and androgen physiology. In Rattus norvegicus (Rat), this protein is 3-oxo-5-alpha-steroid 4-dehydrogenase 1.